Here is a 1160-residue protein sequence, read N- to C-terminus: Protein translocase subunit SecA (1160 aa).

ATP is bound by residues Q162 and 180 to 184 (GEGKT). Residues 342-362 (LLEEKEEAEEEGDSRRAQELE) are disordered. Over residues 344-353 (EEKEEAEEEG) the composition is skewed to acidic residues. D726 serves as a coordination point for ATP. The disordered stretch occupies residues 1060 to 1134 (EVQTEGQGPR…RNEYVTVRNN (75 aa)). The span at 1074–1083 (QRNAQTQHDS) shows a compositional bias: polar residues. Residues 1104-1115 (AAERDPTVEEKQ) show a composition bias toward basic and acidic residues.

It belongs to the SecA family. Monomer and homodimer. Part of the essential Sec protein translocation apparatus which comprises SecA, SecYEG and auxiliary proteins SecDF. Other proteins may also be involved.

It localises to the cell inner membrane. The protein resides in the cytoplasm. The enzyme catalyses ATP + H2O + cellular proteinSide 1 = ADP + phosphate + cellular proteinSide 2.. Functionally, part of the Sec protein translocase complex. Interacts with the SecYEG preprotein conducting channel. Has a central role in coupling the hydrolysis of ATP to the transfer of proteins into and across the cell membrane, serving as an ATP-driven molecular motor driving the stepwise translocation of polypeptide chains across the membrane. The sequence is that of Protein translocase subunit SecA from Salinibacter ruber (strain DSM 13855 / M31).